Consider the following 579-residue polypeptide: ATP-dependent RNA helicase SUV3, mitochondrial (579 aa).

A mitochondrion-targeting transit peptide spans methionine 1 to aspartate 59. One can recognise a Helicase ATP-binding domain in the interval asparagine 72–valine 213. ATP is bound at residue glycine 85–threonine 92. The Helicase C-terminal domain occupies valine 214–serine 388. The N-linked (GlcNAc...) asparagine glycan is linked to asparagine 309.

Belongs to the helicase family. As to quaternary structure, homodimer; in free form. Component of the mitochondrial degradosome (mtEXO) complex which is a heteropentamer containing 2 copies of SUPV3L1 and 3 copies of PNPT1. Mg(2+) serves as cofactor. Requires Mn(2+) as cofactor.

It is found in the nucleus. The protein resides in the mitochondrion matrix. Its subcellular location is the mitochondrion nucleoid. It carries out the reaction ATP + H2O = ADP + phosphate + H(+). In terms of biological role, major helicase player in mitochondrial RNA metabolism. Component of the mitochondrial degradosome (mtEXO) complex, that degrades 3' overhang double-stranded RNA with a 3'-to-5' directionality in an ATP-dependent manner. ATPase and ATP-dependent multisubstrate helicase, able to unwind double-stranded (ds) DNA and RNA, and RNA/DNA heteroduplexes in the 5'-to-3' direction. Plays a role in the RNA surveillance system in mitochondria; regulates the stability of mature mRNAs, the removal of aberrantly formed mRNAs and the rapid degradation of non coding processing intermediates. Confers salinity and drought stress tolerances by maintaining both photosynthesis and antioxidant machinery, probably via an increase in plant hormones levels such as gibberellic acid (GA(3)), the cytokinin zeatin (Z) and indole-3-acetic acid (IAA). The sequence is that of ATP-dependent RNA helicase SUV3, mitochondrial from Oryza sativa subsp. japonica (Rice).